The chain runs to 185 residues: Large ribosomal subunit protein bL25 (185 aa).

It belongs to the bacterial ribosomal protein bL25 family. CTC subfamily. In terms of assembly, part of the 50S ribosomal subunit; part of the 5S rRNA/L5/L18/L25 subcomplex. Contacts the 5S rRNA. Binds to the 5S rRNA independently of L5 and L18.

In terms of biological role, this is one of the proteins that binds to the 5S RNA in the ribosome where it forms part of the central protuberance. This is Large ribosomal subunit protein bL25 from Chlamydia pneumoniae (Chlamydophila pneumoniae).